The primary structure comprises 391 residues: 3-ketoacyl-CoA thiolase, peroxisomal (391 aa).

C92 (acyl-thioester intermediate) is an active-site residue. Catalysis depends on proton acceptor residues H335 and C366.

It belongs to the thiolase-like superfamily. Thiolase family. In terms of assembly, homodimer.

It is found in the peroxisome. The catalysed reaction is an acyl-CoA + acetyl-CoA = a 3-oxoacyl-CoA + CoA. Its pathway is lipid metabolism; fatty acid metabolism. The chain is 3-ketoacyl-CoA thiolase, peroxisomal (FOX3) from Encephalitozoon cuniculi (strain GB-M1) (Microsporidian parasite).